We begin with the raw amino-acid sequence, 132 residues long: Transmembrane protein C1orf162 homolog (132 aa).

Residues 36-56 form a helical membrane-spanning segment; sequence IILAFFAGVLLTLLIVALIFL. Residues 95–132 form a disordered region; it reads TFKPPEENSNDLTRNHSSGLEPTIYSQIKVTDSDLPLP. The segment covering 104 to 124 has biased composition (polar residues); sequence NDLTRNHSSGLEPTIYSQIKV. Ser111 bears the Phosphoserine mark.

The protein resides in the membrane. In Mus musculus (Mouse), this protein is Transmembrane protein C1orf162 homolog.